We begin with the raw amino-acid sequence, 101 residues long: Thiosulfate sulfurtransferase GlpE (101 aa).

Residues 17–101 form the Rhodanese domain; it reads EAKSVQIVDI…GFSAWHEANA (85 aa). Cysteine 65 acts as the Cysteine persulfide intermediate in catalysis.

Belongs to the GlpE family.

It is found in the cytoplasm. The enzyme catalyses thiosulfate + hydrogen cyanide = thiocyanate + sulfite + 2 H(+). The catalysed reaction is thiosulfate + [thioredoxin]-dithiol = [thioredoxin]-disulfide + hydrogen sulfide + sulfite + 2 H(+). Its function is as follows. Transferase that catalyzes the transfer of sulfur from thiosulfate to thiophilic acceptors such as cyanide or dithiols. May function in a CysM-independent thiosulfate assimilation pathway by catalyzing the conversion of thiosulfate to sulfite, which can then be used for L-cysteine biosynthesis. The protein is Thiosulfate sulfurtransferase GlpE of Shewanella oneidensis (strain ATCC 700550 / JCM 31522 / CIP 106686 / LMG 19005 / NCIMB 14063 / MR-1).